The chain runs to 320 residues: MRQTKTGILLANLGTPDAPTPEAVKRYLKQFLSDRRVVDTSRLLWWPLLRGVILPLRSPRVAKLYASVWMEGGSPLMVYSRQQQQALAQRLPETPVALGMSYGSPSLESAVDELLAEHVDHIVVLPLYPQYSCSTVGAVWDELARILARKRSIPGISFIRDYADNHDYINALANSVRASFAKHGEPDLLLLSYHGIPQRYADEGDDYPQHCRTTTRELASALEMAPEKVMMTFQSRFGREPWLMPYTDETLKMLGEKGVGHIQVMCPGFAADCLETLEEIAEQNREVFLGAGGKKYEYIPALNATPEHIEMMANLVAAYR.

2 residues coordinate Fe cation: His194 and Glu275.

This sequence belongs to the ferrochelatase family. Monomer.

The protein localises to the cytoplasm. It carries out the reaction heme b + 2 H(+) = protoporphyrin IX + Fe(2+). It functions in the pathway porphyrin-containing compound metabolism; protoheme biosynthesis; protoheme from protoporphyrin-IX: step 1/1. Functionally, catalyzes the ferrous insertion into protoporphyrin IX. In Escherichia coli (strain SMS-3-5 / SECEC), this protein is Ferrochelatase.